A 438-amino-acid polypeptide reads, in one-letter code: MSEASGRAAGNEMPAKKQKLSSDENSNPELSGDENDDSVSIESGTNTERPDTPTNAANAPGRKGWGKGKWKSKKCKYSFKCVNSLKEDHNQPLFGVQFNWHSKEGDPLVFATVGSNRVTLYECHPQGDIRLLQSYVDADADENFYTCAWTYDSNTSHPLLAVAGSRGIIRIINPITMQCIKHYVGHGNAINELKFHPRDPNLLLSVSKDHALRLWNIQTDTLVAIFGGVEGHRDEVLSADYDLLGEKIMSCGMDHSLKLWRINSLRMKTAIKESYDYNPNKTNRPFVSQKVHFPDFSTRDIHRNYVDCVRWLGDLILSKSCENAIVCWKPGKMEDDIEKIKASESNVTILGRFDYSQCDIWYMRFSMDFWQKMLALGNQVGKLYVWDLEVEDPHKAKCTTLTYPKCASAIRQTSFSRDSSVLIAVCDDSTIWRWDRLR.

The tract at residues 1–70 (MSEASGRAAG…GRKGWGKGKW (70 aa)) is disordered. Over residues 40 to 57 (SIESGTNTERPDTPTNAA) the composition is skewed to polar residues. 7 WD repeats span residues 88–131 (DHNQ…DIRL), 139–182 (DADE…CIKH), 185–225 (GHGN…LVAI), 231–270 (GHRD…MKTA), 301–338 (IHRN…DDIE), 356–396 (SQCD…PHKA), and 405–438 (KCAS…DRLR).

It belongs to the WD repeat ESC family. In terms of assembly, component of the prc2/eed-ezh2 complex. Can interact with ezh2, hdac1 and taf9. Interacts with yy1.

It is found in the nucleus. Functionally, polycomb group (PcG) protein. Component of the prc2/eed-ezh2 complex, which methylates 'Lys-9' and 'Lys-27' of histone H3, leading to transcriptional repression of the affected target gene. May play a role in neural induction. This chain is Polycomb protein eed-B (eed-b), found in Xenopus laevis (African clawed frog).